We begin with the raw amino-acid sequence, 379 residues long: Queuine tRNA-ribosyltransferase (379 aa).

Asp94 (proton acceptor) is an active-site residue. Residues 94–98 (DSGGF), Asp148, Gln191, and Gly218 contribute to the substrate site. The RNA binding stretch occupies residues 249–255 (GVGSPDS). Asp268 serves as the catalytic Nucleophile. Residues 273 to 277 (TRIAR) form an RNA binding; important for wobble base 34 recognition region. Zn(2+) is bound by residues Cys306, Cys308, Cys311, and His337.

The protein belongs to the queuine tRNA-ribosyltransferase family. Homodimer. Within each dimer, one monomer is responsible for RNA recognition and catalysis, while the other monomer binds to the replacement base PreQ1. Requires Zn(2+) as cofactor.

The enzyme catalyses 7-aminomethyl-7-carbaguanine + guanosine(34) in tRNA = 7-aminomethyl-7-carbaguanosine(34) in tRNA + guanine. It functions in the pathway tRNA modification; tRNA-queuosine biosynthesis. In terms of biological role, catalyzes the base-exchange of a guanine (G) residue with the queuine precursor 7-aminomethyl-7-deazaguanine (PreQ1) at position 34 (anticodon wobble position) in tRNAs with GU(N) anticodons (tRNA-Asp, -Asn, -His and -Tyr). Catalysis occurs through a double-displacement mechanism. The nucleophile active site attacks the C1' of nucleotide 34 to detach the guanine base from the RNA, forming a covalent enzyme-RNA intermediate. The proton acceptor active site deprotonates the incoming PreQ1, allowing a nucleophilic attack on the C1' of the ribose to form the product. After dissociation, two additional enzymatic reactions on the tRNA convert PreQ1 to queuine (Q), resulting in the hypermodified nucleoside queuosine (7-(((4,5-cis-dihydroxy-2-cyclopenten-1-yl)amino)methyl)-7-deazaguanosine). In Listeria monocytogenes serovar 1/2a (strain ATCC BAA-679 / EGD-e), this protein is Queuine tRNA-ribosyltransferase.